The sequence spans 630 residues: 1-deoxy-D-xylulose-5-phosphate synthase (630 aa).

Residues H74 and 115 to 117 (GHA) contribute to the thiamine diphosphate site. D146 contacts Mg(2+). Thiamine diphosphate contacts are provided by residues 147-148 (AA), N175, F284, and E364. N175 is a binding site for Mg(2+).

This sequence belongs to the transketolase family. DXPS subfamily. Homodimer. Requires Mg(2+) as cofactor. The cofactor is thiamine diphosphate.

The catalysed reaction is D-glyceraldehyde 3-phosphate + pyruvate + H(+) = 1-deoxy-D-xylulose 5-phosphate + CO2. It participates in metabolic intermediate biosynthesis; 1-deoxy-D-xylulose 5-phosphate biosynthesis; 1-deoxy-D-xylulose 5-phosphate from D-glyceraldehyde 3-phosphate and pyruvate: step 1/1. Catalyzes the acyloin condensation reaction between C atoms 2 and 3 of pyruvate and glyceraldehyde 3-phosphate to yield 1-deoxy-D-xylulose-5-phosphate (DXP). This chain is 1-deoxy-D-xylulose-5-phosphate synthase, found in Methylacidiphilum infernorum (isolate V4) (Methylokorus infernorum (strain V4)).